The primary structure comprises 357 residues: Multiple sugar-binding periplasmic protein SbpA (357 aa).

Residues 1-20 (MSSSFTTTLAGMAVGMLVLA) form the signal peptide.

The protein belongs to the bacterial solute-binding protein 2 family.

The protein localises to the periplasm. Mediates chemotaxis towards D-galactose, L-arabinose and D-fucose but not towards D-fructose. Probably part of a binding-protein high affinity uptake system. This is Multiple sugar-binding periplasmic protein SbpA (sbpA) from Azospirillum brasilense.